The following is a 269-amino-acid chain: Shikimate dehydrogenase (NADP(+)) (269 aa).

Shikimate-binding positions include 14–16 (TLS) and threonine 60. Lysine 64 (proton acceptor) is an active-site residue. NADP(+) is bound at residue aspartate 76. 2 residues coordinate shikimate: asparagine 85 and aspartate 100. Residues 122 to 126 (GAGGA) and methionine 208 each bind NADP(+). Tyrosine 210 lines the shikimate pocket. Position 232 (glycine 232) interacts with NADP(+).

Belongs to the shikimate dehydrogenase family. Homodimer.

It carries out the reaction shikimate + NADP(+) = 3-dehydroshikimate + NADPH + H(+). Its pathway is metabolic intermediate biosynthesis; chorismate biosynthesis; chorismate from D-erythrose 4-phosphate and phosphoenolpyruvate: step 4/7. In terms of biological role, involved in the biosynthesis of the chorismate, which leads to the biosynthesis of aromatic amino acids. Catalyzes the reversible NADPH linked reduction of 3-dehydroshikimate (DHSA) to yield shikimate (SA). The protein is Shikimate dehydrogenase (NADP(+)) of Caldivirga maquilingensis (strain ATCC 700844 / DSM 13496 / JCM 10307 / IC-167).